A 337-amino-acid polypeptide reads, in one-letter code: MKNDNKLQKEALMRLSQLRFPFADAPSIVQAHQKDEQIQGLLIMKVTELCKLIKSQLFVNSYPKELSIFAKLLYLLFTTGRRGRTLGEEYVDLTYTNRKGTRLAGRLKMIVFAFAYPLCPYFITKLYKKIMKNNKESKIEDTESVAAFCKGLLDFILDVHMTLFYFKGAFYSISKRIFGMRYVFKHILSKNEANFREEGSQKYKVLGYILLAQNVMKWYPVLTSTLGSWIYGRKRTNDSITRSSVGLQERSEHESIEGIPKESQLTHINLSDKNQLPFIPEASRKCILCLMNMSDPSCAPCGHLFCWSCLMSWCKERPECPLCRQHCQPQEILVLRQ.

The Peroxisomal matrix portion of the chain corresponds to 1 to 24; the sequence is MKNDNKLQKEALMRLSQLRFPFAD. Residues 25–54 traverse the membrane as a helical segment; the sequence is APSIVQAHQKDEQIQGLLIMKVTELCKLIK. Residue serine 55 is a topological domain, cytoplasmic. The helical transmembrane segment at 56–77 threads the bilayer; sequence QLFVNSYPKELSIFAKLLYLLF. The Peroxisomal matrix portion of the chain corresponds to 78 to 105; that stretch reads TTGRRGRTLGEEYVDLTYTNRKGTRLAG. A helical membrane pass occupies residues 106 to 138; the sequence is RLKMIVFAFAYPLCPYFITKLYKKIMKNNKESK. The Cytoplasmic segment spans residues 139–145; sequence IEDTESV. Residues 146 to 166 form a helical membrane-spanning segment; sequence AAFCKGLLDFILDVHMTLFYF. At 167-202 the chain is on the peroxisomal matrix side; it reads KGAFYSISKRIFGMRYVFKHILSKNEANFREEGSQK. The helical transmembrane segment at 203-222 threads the bilayer; the sequence is YKVLGYILLAQNVMKWYPVL. Residues 223 to 337 are Cytoplasmic-facing; it reads TSTLGSWIYG…QPQEILVLRQ (115 aa). Zn(2+) contacts are provided by cysteine 286, cysteine 289, cysteine 301, histidine 303, cysteine 306, cysteine 309, cysteine 320, and cysteine 323. The RING-type zinc finger occupies 286–327; the sequence is CILCLMNMSDPSCAPCGHLFCWSCLMSWCKERPECPLCRQHC.

The protein belongs to the pex2/pex10/pex12 family. In terms of assembly, component of the PEX2-PEX10-PEX12 retrotranslocation channel, composed of PEX2, PEX10 and PEX12.

It localises to the peroxisome membrane. The catalysed reaction is S-ubiquitinyl-[E2 ubiquitin-conjugating enzyme]-L-cysteine + [acceptor protein]-L-lysine = [E2 ubiquitin-conjugating enzyme]-L-cysteine + N(6)-ubiquitinyl-[acceptor protein]-L-lysine.. The protein operates within protein modification; protein ubiquitination. Its activity is regulated as follows. The E3 ubiquitin-protein ligase activity is stimulated by PEX12. Its function is as follows. E3 ubiquitin-protein ligase component of a retrotranslocation channel required for peroxisome organization by mediating export of the PEX5 receptor from peroxisomes to the cytosol, thereby promoting PEX5 recycling. The retrotranslocation channel is composed of PEX2, PEX10 and PEX12; each subunit contributing transmembrane segments that coassemble into an open channel that specifically allows the passage of PEX5 through the peroxisomal membrane. PEX10 also regulates PEX5 recycling by acting as a E3 ubiquitin-protein ligase. When PEX5 recycling is compromised, PEX10 catalyzes polyubiquitination of PEX5 during its passage through the retrotranslocation channel, leading to its degradation. This chain is Peroxisome biogenesis factor 10, found in Saccharomyces cerevisiae (strain ATCC 204508 / S288c) (Baker's yeast).